Here is a 217-residue protein sequence, read N- to C-terminus: 7-cyano-7-deazaguanine synthase (217 aa).

Residue 10 to 20 (FSGGQDSTTCL) participates in ATP binding. Residues cysteine 185, cysteine 194, cysteine 197, and cysteine 200 each contribute to the Zn(2+) site.

This sequence belongs to the QueC family. Homodimer. Zn(2+) is required as a cofactor.

It catalyses the reaction 7-carboxy-7-deazaguanine + NH4(+) + ATP = 7-cyano-7-deazaguanine + ADP + phosphate + H2O + H(+). It participates in purine metabolism; 7-cyano-7-deazaguanine biosynthesis. Catalyzes the ATP-dependent conversion of 7-carboxy-7-deazaguanine (CDG) to 7-cyano-7-deazaguanine (preQ(0)). The polypeptide is 7-cyano-7-deazaguanine synthase (Streptococcus thermophilus (strain ATCC BAA-491 / LMD-9)).